A 383-amino-acid polypeptide reads, in one-letter code: MYSVGLMSGTSLDGIDAVLAEISGNGRNTKVKQIEFITLEISKDIKDEIRKCCIEEESSVDLICSLNFKLGYLFSKAVKSVCHKANFHIANLDFIASHGQTIFHIPRSYNNFVSSTLQIGEPAVIAYETNTKVISNFRVMDIAAGGEGAPLVPYSEFLLYSDKNKNLALQNIGGIGNITIIPKSCNIDDVFAFDTGPGNMIIDGVCQRLFNRKYDKNGYFASKGKINEEMLKDLMSHKYLSQAPPKSTGREVFGQVYLDNMLNKYKHVDKYDLIATVTMFTAKAIYYNYKNFILPKVNVDTLLIGGGGAHNLTLIGYIKELLLEVEVLTQDEYGYSSDAKEALAFVILGNETLNNSFSNVISATGAKNKVILGNITPKPFGGK.

9 to 16 (GTSLDGID) provides a ligand contact to ATP.

Belongs to the anhydro-N-acetylmuramic acid kinase family.

The enzyme catalyses 1,6-anhydro-N-acetyl-beta-muramate + ATP + H2O = N-acetyl-D-muramate 6-phosphate + ADP + H(+). Its pathway is amino-sugar metabolism; 1,6-anhydro-N-acetylmuramate degradation. It functions in the pathway cell wall biogenesis; peptidoglycan recycling. Its function is as follows. Catalyzes the specific phosphorylation of 1,6-anhydro-N-acetylmuramic acid (anhMurNAc) with the simultaneous cleavage of the 1,6-anhydro ring, generating MurNAc-6-P. Is required for the utilization of anhMurNAc either imported from the medium or derived from its own cell wall murein, and thus plays a role in cell wall recycling. This chain is Anhydro-N-acetylmuramic acid kinase, found in Clostridioides difficile (strain 630) (Peptoclostridium difficile).